A 368-amino-acid polypeptide reads, in one-letter code: Mitogen-activated protein kinase KSS1 (368 aa).

Positions tyrosine 13–leucine 313 constitute a Protein kinase domain. Residues isoleucine 19 to valine 27 and lysine 42 contribute to the ATP site. The active-site Proton acceptor is aspartate 143. Threonine 183 carries the post-translational modification Phosphothreonine. The TXY signature appears at threonine 183–tyrosine 185. Position 185 is a phosphotyrosine (tyrosine 185).

This sequence belongs to the protein kinase superfamily. Ser/Thr protein kinase family. MAP kinase subfamily. HOG1 sub-subfamily. In the nucleus, KSS1 forms a complex with DIG1, DIG2 and STE12; in contrast to FUS3 the interaction of KSS1 with STE12 does not depend on DIG1 and DIG2. Phosphorylated KSS1 shows reduced interaction with STE12. During pheromone activation and phosphorylation, KSS1 forms a membrane-associated complex with the scaffold protein STE5, the MAPKK STE7, the MAPKKK STE11, and the G-protein beta subunit GBB/STE4; interacting directly with POF1, STE7 and STE5 proteins. Mg(2+) serves as cofactor. In terms of processing, dually phosphorylated on Thr-183 and Tyr-185 by STE7 in response to pheromone or carbon/nitrogen limitation, which activates the enzyme. Activated FUS3 down-regulates KSS1 phosphorylation.

The protein localises to the nucleus. It is found in the cytoplasm. Its subcellular location is the periplasm. It catalyses the reaction L-seryl-[protein] + ATP = O-phospho-L-seryl-[protein] + ADP + H(+). The enzyme catalyses L-threonyl-[protein] + ATP = O-phospho-L-threonyl-[protein] + ADP + H(+). With respect to regulation, activated by tyrosine and threonine phosphorylation after pheromone treatment or carbon/nitrogen limitation. Its function is as follows. Together with closely related FUS3, KSS1 is the final kinase in the signal transduction cascade regulating activation/repression of the mating and filamentation pathways, induced by pheromone and nitrogen/carbon limitation, respectively. Phosphorylated KSS1 activates both pathways, whereas activated FUS3 activates the mating but suppresses the filamentation pathway. KSS1 activity is down-regulated by FUS3 during pheromone induction to prevent inappropriate activation of the filamentation pathway. During induction of filamentation, KSS1 activates the transcription factor STE12 resulting in its binding to and activation of filamentation specific genes. Non-activated KSS1 has a kinase-independent repressive effect on STE12 transcriptional activity, that is mediated by direct binding to STE12 and depends on the presence of DIG1 and DIG2, and that is required for the suppression of filamentation under normal growth conditions. SSN3/SRB10 contributes further to the suppression of filamentation under these conditions by reducing STE12 stability independent of KSS1. FUS3 can partially compensate for the lack of KSS1 but filamentation becomes constitutively induced at a low level in the absence of any signal. KSS1 phosphorylates STE7, STE5, FAR1, DIG1, DIG2, STE12, and SST2. The polypeptide is Mitogen-activated protein kinase KSS1 (KSS1) (Saccharomyces cerevisiae (strain ATCC 204508 / S288c) (Baker's yeast)).